Here is a 685-residue protein sequence, read N- to C-terminus: Methionine--tRNA ligase (685 aa).

Residues Pro12–His22 carry the 'HIGH' region motif. Zn(2+)-binding residues include Cys143, Cys146, Cys156, and Cys159. Positions Lys339 to Ser343 match the 'KMSKS' region motif. Lys342 serves as a coordination point for ATP. One can recognise a tRNA-binding domain in the interval Asp582–Gly685.

It belongs to the class-I aminoacyl-tRNA synthetase family. MetG type 1 subfamily. Homodimer. The cofactor is Zn(2+).

The protein localises to the cytoplasm. The enzyme catalyses tRNA(Met) + L-methionine + ATP = L-methionyl-tRNA(Met) + AMP + diphosphate. Functionally, is required not only for elongation of protein synthesis but also for the initiation of all mRNA translation through initiator tRNA(fMet) aminoacylation. This chain is Methionine--tRNA ligase, found in Neisseria meningitidis serogroup C (strain 053442).